Here is a 430-residue protein sequence, read N- to C-terminus: Adenylosuccinate synthetase (430 aa).

Residues 12–18 (GDEGKGK) and 40–42 (GHT) each bind GTP. Residue Asp13 is the Proton acceptor of the active site. Positions 13 and 40 each coordinate Mg(2+). IMP-binding positions include 13 to 16 (DEGK), 38 to 41 (NAGH), Thr128, Arg142, Gln223, Thr238, and Arg302. His41 functions as the Proton donor in the catalytic mechanism. 298 to 304 (TTTGRPR) is a substrate binding site. Residues Arg304, 330-332 (SID), and 412-414 (SVG) each bind GTP.

The protein belongs to the adenylosuccinate synthetase family. Homodimer. Mg(2+) is required as a cofactor.

It is found in the cytoplasm. It catalyses the reaction IMP + L-aspartate + GTP = N(6)-(1,2-dicarboxyethyl)-AMP + GDP + phosphate + 2 H(+). It participates in purine metabolism; AMP biosynthesis via de novo pathway; AMP from IMP: step 1/2. In terms of biological role, plays an important role in the de novo pathway of purine nucleotide biosynthesis. Catalyzes the first committed step in the biosynthesis of AMP from IMP. In Streptococcus uberis (strain ATCC BAA-854 / 0140J), this protein is Adenylosuccinate synthetase.